The chain runs to 147 residues: Hemoglobin subunit beta (147 aa).

At V2 the chain carries N-acetylvaline. In terms of domain architecture, Globin spans 3 to 147 (HLTGEEKSAV…VANALAHKYH (145 aa)). T13 is modified (phosphothreonine). S45 bears the Phosphoserine mark. N6-acetyllysine is present on K60. H64 serves as a coordination point for heme b. An N6-acetyllysine modification is found at K83. H93 lines the heme b pocket. C94 bears the S-nitrosocysteine mark. Position 145 is an N6-acetyllysine (K145).

The protein belongs to the globin family. In terms of assembly, heterotetramer of two alpha chains and two beta chains. As to expression, red blood cells.

Functionally, involved in oxygen transport from the lung to the various peripheral tissues. The sequence is that of Hemoglobin subunit beta (HBB) from Callithrix jacchus (White-tufted-ear marmoset).